The chain runs to 364 residues: MSKKMNSTPKKDGFWMPGEWEKHDQCWMIWPERSDNWRLGAKPAQRVFVNVANAIAKYEKVTMLVSHQQFENARNLLDQNVRVIEMSNDDSWMRDVGPTIVKNKDGEIRGVDWVFNAWEGFKGGLYFPWDKDDAIARKVCEICNIDYYRTDFVLEGGSIHTDGDGTLYTTEECLLNENRNPDLTKEQIEENLKEYCGVEKVIWLPLGVYNDETNGHVDNLLNVVSPGHVVLTWTDDTTDPQYERSKLAYDILTNTLDAKGRKIKVTKLHQPGPLFITKEEAEGIDVCDTMSREPEQRMPASYANYYIANNAIILPIFGDKYDDLAVKTLQSVYPNHKIETVMAREILLGGGNIHCITQQQPTTK.

Residue C355 is the Amidino-cysteine intermediate of the active site.

This sequence belongs to the agmatine deiminase family.

It carries out the reaction agmatine + H2O = N-carbamoylputrescine + NH4(+). The chain is Putative agmatine deiminase from Mycoplasma mycoides subsp. mycoides SC (strain CCUG 32753 / NCTC 10114 / PG1).